The chain runs to 187 residues: Elongation factor P (187 aa).

This sequence belongs to the elongation factor P family.

The protein resides in the cytoplasm. The protein operates within protein biosynthesis; polypeptide chain elongation. Involved in peptide bond synthesis. Stimulates efficient translation and peptide-bond synthesis on native or reconstituted 70S ribosomes in vitro. Probably functions indirectly by altering the affinity of the ribosome for aminoacyl-tRNA, thus increasing their reactivity as acceptors for peptidyl transferase. In Mycolicibacterium gilvum (strain PYR-GCK) (Mycobacterium gilvum (strain PYR-GCK)), this protein is Elongation factor P.